We begin with the raw amino-acid sequence, 361 residues long: Chitinase-3-like protein 1 (361 aa).

Residues 1 to 361 form the GH18 domain; that stretch reads YKLICYYTSW…SAVKDVLAEV (361 aa). Cys-5 and Cys-30 are oxidised to a cystine. An N-linked (GlcNAc...) asparagine glycan is attached at Asn-39. Chitin is bound by residues 49–50, 76–79, Tyr-120, 183–186, and Arg-241; these read EW, GGWN, and LTYD. Cys-278 and Cys-342 are oxidised to a cystine. Residues 302-316 are important for AKT1 activation and IL8 production; it reads QWVAYDDQESVKNKA. Trp-330 provides a ligand contact to chitin. A glycan (N-linked (GlcNAc...) asparagine) is linked at Asn-345.

This sequence belongs to the glycosyl hydrolase 18 family. As to quaternary structure, monomer. In terms of tissue distribution, detected in mammary gland.

The protein resides in the secreted. The protein localises to the extracellular space. Its subcellular location is the cytoplasm. It localises to the perinuclear region. It is found in the endoplasmic reticulum. In terms of biological role, carbohydrate-binding lectin with a preference for chitin. Has no chitinase activity. May play a role in tissue remodeling and in the capacity of cells to respond to and cope with changes in their environment. Plays a role in T-helper cell type 2 (Th2) inflammatory response and IL-13-induced inflammation, regulating allergen sensitization, inflammatory cell apoptosis, dendritic cell accumulation and M2 macrophage differentiation. Facilitates invasion of pathogenic enteric bacteria into colonic mucosa and lymphoid organs. Mediates activation of AKT1 signaling pathway and subsequent IL8 production in colonic epithelial cells. Regulates antibacterial responses in lung by contributing to macrophage bacterial killing, controlling bacterial dissemination and augmenting host tolerance. Also regulates hyperoxia-induced injury, inflammation and epithelial apoptosis in lung. The chain is Chitinase-3-like protein 1 (CHI3L1) from Ovis aries (Sheep).